Reading from the N-terminus, the 407-residue chain is Arginine deiminase (407 aa).

The active-site Amidino-cysteine intermediate is C397.

The protein belongs to the arginine deiminase family.

It localises to the cytoplasm. It carries out the reaction L-arginine + H2O = L-citrulline + NH4(+). Its pathway is amino-acid degradation; L-arginine degradation via ADI pathway; carbamoyl phosphate from L-arginine: step 1/2. The sequence is that of Arginine deiminase from Salmonella choleraesuis (strain SC-B67).